The following is a 155-amino-acid chain: Large ribosomal subunit protein uL15 (155 aa).

Residues 1–16 (MVRRFKRAVKYRRGSR) show a composition bias toward basic residues. The tract at residues 1–35 (MVRRFKRAVKYRRGSRTHGWGRVGQHRKSGGSGGK) is disordered.

It belongs to the universal ribosomal protein uL15 family. In terms of assembly, part of the 50S ribosomal subunit.

In terms of biological role, binds to the 23S rRNA. The sequence is that of Large ribosomal subunit protein uL15 from Pyrobaculum arsenaticum (strain DSM 13514 / JCM 11321 / PZ6).